Here is a 620-residue protein sequence, read N- to C-terminus: MYND-type zinc finger protein MUB1 (620 aa).

The MYND-type; degenerate zinc finger occupies 514-555; sequence NFSCGKWEDFPRQFAKCRRCKRTKYCSRKCQLKAWGYHRYWC. Residues C530, C533, H551, and C555 each contribute to the Zn(2+) site. Residues 563–606 are compositionally biased toward polar residues; the sequence is MRSTNTTTGVNTPNEPSSLNATATTAADVSNSTSTFTPNISTTV. Residues 563-620 are disordered; that stretch reads MRSTNTTTGVNTPNEPSSLNATATTAADVSNSTSTFTPNISTTVPDEISNRDENSIPE. Basic and acidic residues predominate over residues 610–620; it reads ISNRDENSIPE.

Belongs to the MUB1/samB family. Interacts with UBR2 and RPN4.

It localises to the cytoplasm. Its function is as follows. Involved in the determination of the onset of polarized growth. Required for the ubiquitin-dependent degradation of RPN4. Cooperates with UBR2 to transfer ubiquitin from RAD6 to RPN4. The polypeptide is MYND-type zinc finger protein MUB1 (MUB1) (Saccharomyces cerevisiae (strain ATCC 204508 / S288c) (Baker's yeast)).